Here is a 259-residue protein sequence, read N- to C-terminus: Hydroxyethylthiazole kinase 1 (259 aa).

Residue Met-38 coordinates substrate. ATP-binding residues include Arg-113 and Ser-158. Substrate is bound at residue Gly-185.

Belongs to the Thz kinase family. Mg(2+) is required as a cofactor.

The enzyme catalyses 5-(2-hydroxyethyl)-4-methylthiazole + ATP = 4-methyl-5-(2-phosphooxyethyl)-thiazole + ADP + H(+). It participates in cofactor biosynthesis; thiamine diphosphate biosynthesis; 4-methyl-5-(2-phosphoethyl)-thiazole from 5-(2-hydroxyethyl)-4-methylthiazole: step 1/1. Its function is as follows. Catalyzes the phosphorylation of the hydroxyl group of 4-methyl-5-beta-hydroxyethylthiazole (THZ). In Leuconostoc mesenteroides subsp. mesenteroides (strain ATCC 8293 / DSM 20343 / BCRC 11652 / CCM 1803 / JCM 6124 / NCDO 523 / NBRC 100496 / NCIMB 8023 / NCTC 12954 / NRRL B-1118 / 37Y), this protein is Hydroxyethylthiazole kinase 1.